The primary structure comprises 535 residues: BAR/IMD domain-containing adapter protein 2 (535 aa).

Residues 1-250 (MSLSRSEEMH…AQLMQQMANS (250 aa)) enclose the IMD domain. The stretch at 1–251 (MSLSRSEEMH…QLMQQMANSN (251 aa)) forms a coiled coil. Phosphoserine occurs at positions 262, 324, 326, and 337. The tract at residues 308–370 (SEDYNPWADR…TLPRSSSMAA (63 aa)) is disordered. Residues 321-335 (QPKSLSPPQSQSKLS) are compositionally biased toward low complexity. T341 is subject to Phosphothreonine. Phosphoserine is present on S347. Over residues 349-368 (TPKNSYATTENKTLPRSSSM) the composition is skewed to polar residues. Position 361 is a phosphothreonine (T361). Residues S367, S385, S396, and S455 each carry the phosphoserine modification. One can recognise an SH3 domain in the interval 375 to 438 (NGRMRVKAIF…PFSYTRVLDS (64 aa)). Residues 445-486 (HMSLQQGKSSSTGNLLDKDDLALPPPDYGTSSRAFPSQTAGT) form a disordered region. Composition is skewed to polar residues over residues 447-458 (SLQQGKSSSTGN) and 473-486 (GTSS…TAGT).

As to quaternary structure, homodimer. Interacts with CDC42 and RAC1 that have been activated by GTP binding. Binds TIAM1. Interacts with ATN1, ADGRB1, DIAPH1, EPS8, SHANK1, SHANK2, SHANK3, WASF1 and WASF2. Interacts with ENAH after recruitment of CDC42. Phosphorylated on tyrosine residues by INSR in response to insulin treatment. In terms of tissue distribution, ubiquitous.

The protein resides in the cytoplasm. It localises to the membrane. Its subcellular location is the cell projection. The protein localises to the filopodium. It is found in the ruffle. The protein resides in the cytoskeleton. Adapter protein that links membrane-bound small G-proteins to cytoplasmic effector proteins. Necessary for CDC42-mediated reorganization of the actin cytoskeleton and for RAC1-mediated membrane ruffling. Involved in the regulation of the actin cytoskeleton by WASF family members and the Arp2/3 complex. Plays a role in neurite growth. Acts syngeristically with ENAH to promote filipodia formation. Plays a role in the reorganization of the actin cytoskeleton in response to bacterial infection. Participates in actin bundling when associated with EPS8, promoting filopodial protrusions. In Rattus norvegicus (Rat), this protein is BAR/IMD domain-containing adapter protein 2 (Baiap2).